Reading from the N-terminus, the 98-residue chain is MSLVYMNIMMAFTVSLTGLLMYRSHLMSSLLCLEGMMLSLFILATLMILNSHFTLASMMPIILLVFAACEAALGLSLLVMVSNTYGTDYVQNLNLLQC.

The next 3 helical transmembrane spans lie at 1–21 (MSLV…GLLM), 29–49 (SLLC…LMIL), and 61–81 (IILL…LVMV).

It belongs to the complex I subunit 4L family. In terms of assembly, core subunit of respiratory chain NADH dehydrogenase (Complex I) which is composed of 45 different subunits.

The protein resides in the mitochondrion inner membrane. The catalysed reaction is a ubiquinone + NADH + 5 H(+)(in) = a ubiquinol + NAD(+) + 4 H(+)(out). Its function is as follows. Core subunit of the mitochondrial membrane respiratory chain NADH dehydrogenase (Complex I) which catalyzes electron transfer from NADH through the respiratory chain, using ubiquinone as an electron acceptor. Part of the enzyme membrane arm which is embedded in the lipid bilayer and involved in proton translocation. This is NADH-ubiquinone oxidoreductase chain 4L (MT-ND4L) from Ovis aries (Sheep).